The chain runs to 304 residues: Non-specific ribonucleoside hydrolase RihC (304 aa).

Histidine 233 is a catalytic residue.

This sequence belongs to the IUNH family. RihC subfamily.

Hydrolyzes both purine and pyrimidine ribonucleosides with a broad-substrate specificity. The chain is Non-specific ribonucleoside hydrolase RihC from Escherichia coli O157:H7.